The primary structure comprises 227 residues: PKHD-type hydroxylase NE2125 (227 aa).

Residues 78–179 enclose the Fe2OG dioxygenase domain; it reads KIVPPFFNRY…RLACFMFIQS (102 aa). His-97, Asp-99, and His-160 together coordinate Fe cation. Arg-170 contributes to the 2-oxoglutarate binding site.

Requires Fe(2+) as cofactor. The cofactor is L-ascorbate.

The chain is PKHD-type hydroxylase NE2125 from Nitrosomonas europaea (strain ATCC 19718 / CIP 103999 / KCTC 2705 / NBRC 14298).